The primary structure comprises 390 residues: Succinate--CoA ligase [ADP-forming] subunit beta (390 aa).

The 237-residue stretch at 9–245 (KHLLKKYNIP…TTQEDEHETM (237 aa)) folds into the ATP-grasp domain. Residues lysine 46, 53–55 (GRG), glutamate 99, serine 102, and glutamate 107 each bind ATP. Mg(2+) contacts are provided by asparagine 200 and aspartate 214. Residues asparagine 265 and 322–324 (GIV) each bind substrate.

It belongs to the succinate/malate CoA ligase beta subunit family. Heterotetramer of two alpha and two beta subunits. Mg(2+) is required as a cofactor.

The enzyme catalyses succinate + ATP + CoA = succinyl-CoA + ADP + phosphate. It carries out the reaction GTP + succinate + CoA = succinyl-CoA + GDP + phosphate. Its pathway is carbohydrate metabolism; tricarboxylic acid cycle; succinate from succinyl-CoA (ligase route): step 1/1. In terms of biological role, succinyl-CoA synthetase functions in the citric acid cycle (TCA), coupling the hydrolysis of succinyl-CoA to the synthesis of either ATP or GTP and thus represents the only step of substrate-level phosphorylation in the TCA. The beta subunit provides nucleotide specificity of the enzyme and binds the substrate succinate, while the binding sites for coenzyme A and phosphate are found in the alpha subunit. This Coxiella burnetii (strain RSA 493 / Nine Mile phase I) protein is Succinate--CoA ligase [ADP-forming] subunit beta.